We begin with the raw amino-acid sequence, 449 residues long: Exodeoxyribonuclease 7 large subunit (449 aa).

Belongs to the XseA family. Heterooligomer composed of large and small subunits.

It is found in the cytoplasm. The enzyme catalyses Exonucleolytic cleavage in either 5'- to 3'- or 3'- to 5'-direction to yield nucleoside 5'-phosphates.. In terms of biological role, bidirectionally degrades single-stranded DNA into large acid-insoluble oligonucleotides, which are then degraded further into small acid-soluble oligonucleotides. In Aliivibrio fischeri (strain ATCC 700601 / ES114) (Vibrio fischeri), this protein is Exodeoxyribonuclease 7 large subunit.